The sequence spans 204 residues: ATP synthase subunit 4, mitochondrial (204 aa).

The next 2 helical transmembrane spans lie at 27–47 (GILATTAAASVYAISSELYVV) and 52–72 (ILLVTFLGFIALISKTVAPLY).

F-type ATP synthases have 2 components, the catalytic core F(1) and the membrane-embedded component F(0), linked together by a central stalk and a peripheral stalk. The central stalk, also called rotor shaft, is often seen as part of F(1). The peripheral stalk is seen as part of F(0). F(0) contains the membrane channel next to the rotor. F-type ATP synthases form dimers but each monomer functions independently in ATP generation. The dimer consists of 18 different polypeptides: ATP1 (subunit alpha, part of F(1), 3 molecules per monomer), ATP2 (subunit beta, part of F(1), 3 molecules per monomer), ATP3 (subunit gamma, part of the central stalk), ATP4 (subunit b, part of the peripheral stalk), ATP5/OSCP (subunit 5/OSCP, part of the peripheral stalk), ATP6 (subunit a, part of the peripheral stalk), ATP7 (subunit d, part of the peripheral stalk), ATP8 (subunit 8, part of the peripheral stalk), OLI1 (subunit c, part of the rotor, 10 molecules per monomer), ATP14 (subunit h, part of the peripheral stalk), ATP15 (subunit epsilon, part of the central stalk), ATP16 (subunit delta, part of the central stalk), ATP17 (subunit f, part of the peripheral stalk), ATP18 (subunit i/j, part of the peripheral stalk). Dimer-specific subunits are ATP19 (subunit k, at interface between monomers), ATP20 (subunit g, at interface between monomers), TIM11 (subunit e, at interface between monomers). Also contains subunit L.

The protein resides in the mitochondrion inner membrane. In terms of biological role, mitochondrial membrane ATP synthase (F(1)F(0) ATP synthase or Complex V) produces ATP from ADP in the presence of a proton gradient across the membrane which is generated by electron transport complexes of the respiratory chain. F-type ATP synthases consist of two structural domains, F(1) - containing the extramembraneous catalytic core, and F(0) - containing the membrane proton channel, linked together by a central stalk and a peripheral stalk. During catalysis, ATP synthesis in the catalytic domain of F(1) is coupled via a rotary mechanism of the central stalk subunits to proton translocation. Part of the complex F(0) domain and the peripheral stalk, which acts as a stator to hold the catalytic alpha/ATP1(3)beta/ATP2(3) subcomplex and subunit a/ATP6 static relative to the rotary elements. In Pichia angusta (Yeast), this protein is ATP synthase subunit 4, mitochondrial.